The primary structure comprises 193 residues: Dual-action ribosomal maturation protein DarP (193 aa).

The span at 1 to 10 shows a compositional bias: basic and acidic residues; the sequence is MRGRDEDTGE. Disordered regions lie at residues 1–20 and 170–193; these read MRGR…SQQR and SQKP…ENDE. A compositionally biased stretch (acidic residues) spans 181–193; the sequence is GLEDEESASENDE.

Belongs to the DarP family.

Its subcellular location is the cytoplasm. In terms of biological role, member of a network of 50S ribosomal subunit biogenesis factors which assembles along the 30S-50S interface, preventing incorrect 23S rRNA structures from forming. Promotes peptidyl transferase center (PTC) maturation. The chain is Dual-action ribosomal maturation protein DarP from Xanthomonas campestris pv. campestris (strain 8004).